We begin with the raw amino-acid sequence, 152 residues long: Small ribosomal subunit protein uS19 (152 aa).

It belongs to the universal ribosomal protein uS19 family.

Its function is as follows. Protein S19 forms a complex with S13 that binds strongly to the 16S ribosomal RNA. The polypeptide is Small ribosomal subunit protein uS19 (rps19) (Methanocaldococcus jannaschii (strain ATCC 43067 / DSM 2661 / JAL-1 / JCM 10045 / NBRC 100440) (Methanococcus jannaschii)).